The chain runs to 121 residues: Large ribosomal subunit protein bL12 (121 aa).

The protein belongs to the bacterial ribosomal protein bL12 family. As to quaternary structure, homodimer. Part of the ribosomal stalk of the 50S ribosomal subunit. Forms a multimeric L10(L12)X complex, where L10 forms an elongated spine to which 2 to 4 L12 dimers bind in a sequential fashion. Binds GTP-bound translation factors.

In terms of biological role, forms part of the ribosomal stalk which helps the ribosome interact with GTP-bound translation factors. Is thus essential for accurate translation. In Shewanella baltica (strain OS185), this protein is Large ribosomal subunit protein bL12.